Consider the following 526-residue polypeptide: Exodeoxyribonuclease 7 large subunit (526 aa).

The interval 497–526 (AMTTEGGTPPAGAKKRSTKPAEPPKQGSLF) is disordered.

This sequence belongs to the XseA family. Heterooligomer composed of large and small subunits.

The protein localises to the cytoplasm. It carries out the reaction Exonucleolytic cleavage in either 5'- to 3'- or 3'- to 5'-direction to yield nucleoside 5'-phosphates.. Functionally, bidirectionally degrades single-stranded DNA into large acid-insoluble oligonucleotides, which are then degraded further into small acid-soluble oligonucleotides. This is Exodeoxyribonuclease 7 large subunit from Rhizobium johnstonii (strain DSM 114642 / LMG 32736 / 3841) (Rhizobium leguminosarum bv. viciae).